Here is a 107-residue protein sequence, read N- to C-terminus: Putative antitoxin VapB5 (107 aa).

The next 2 membrane-spanning stretches (helical) occupy residues Gly-3–Ala-23 and Leu-65–Tyr-85.

The protein resides in the cell membrane. In terms of biological role, possibly the antitoxin component of a type II toxin-antitoxin (TA) system. Its cognate toxin is VapC5 (Potential). The chain is Putative antitoxin VapB5 (vapB5) from Methanocaldococcus jannaschii (strain ATCC 43067 / DSM 2661 / JAL-1 / JCM 10045 / NBRC 100440) (Methanococcus jannaschii).